Reading from the N-terminus, the 316-residue chain is Phosducin-like protein 1 (316 aa).

The segment at 1-61 (MEQNILNSIL…EDGDKEYEVD (61 aa)) is disordered. Residues 12-41 (KFGDGDQERSDIRHNDSGDENDNHSDHEGN) show a composition bias toward basic and acidic residues. Positions 49–61 (EGNEDGDKEYEVD) are enriched in acidic residues. Residues 95–290 (SDYAEHREKQ…LLSSYDIIPN (196 aa)) enclose the Phosducin domain. Residues 102–156 (EKQKQKYLQKKYETQKMLEKMCFTTRDQPPPTEEENQLDSDDDDLERIRKARMEQ) are a coiled coil. Residues 175–316 (FGYFKQIDSS…RPESDDDNDD (142 aa)) form a thioredoxin fold region. The segment at 293–316 (KAKNSNWETSLSRKRPESDDDNDD) is disordered.

This sequence belongs to the phosducin family.

Its subcellular location is the cytoplasm. In terms of biological role, required for normal chemotaxis in response to cAMP and folate. Required for the heterodimerization of the G protein beta and gamma subunits gpbA and gpgA, which is itself thought to be necessary for prenylation of the gamma subunit gpgA and its association with plasma membranes. This Dictyostelium discoideum (Social amoeba) protein is Phosducin-like protein 1 (phlp1).